A 452-amino-acid polypeptide reads, in one-letter code: Exodeoxyribonuclease 7 large subunit (452 aa).

This sequence belongs to the XseA family. Heterooligomer composed of large and small subunits.

The protein localises to the cytoplasm. It catalyses the reaction Exonucleolytic cleavage in either 5'- to 3'- or 3'- to 5'-direction to yield nucleoside 5'-phosphates.. Functionally, bidirectionally degrades single-stranded DNA into large acid-insoluble oligonucleotides, which are then degraded further into small acid-soluble oligonucleotides. The polypeptide is Exodeoxyribonuclease 7 large subunit (Bordetella avium (strain 197N)).